The primary structure comprises 621 residues: Glutathione-regulated potassium-efflux system protein KefC (621 aa).

The next 13 helical transmembrane spans lie at 4–24, 26–46, 54–74, 90–110, 114–134, 149–169, 178–198, 218–237, 238–257, 270–290, 294–314, 326–346, and 359–379; these read HTLIQALIYLGAAALIVPIAV, LGLGSVLGYLIAGCIIGPWAL, AILHFAEIGVVLMLFVIGLEL, GALQMVACGVLIGLFCMLLGL, VAELIGMTLALSSTAIAMQAM, FAVLLFQDIAAIPLVAMIPLL, LMAFALSALKVAAALALVVVL, VFSAVALFLVFGFGLLLEEV, GLSMAMGAFLAGVLLASSEY, GLLLGLFFIGVGMSIDFGTLV, LRIVILLVGFLAIKMLMLWLI, RWFAVLLGQGSEFAFVVFGAA, and ALTLAVALSMAATPILLVLLT. Positions 399–518 constitute an RCK N-terminal domain; the sequence is QPRVIVAGFG…AGVEAPERET (120 aa). The tract at residues 598–621 is disordered; the sequence is GWQGTEEGRHTGDIADEPENKPSA.

The protein belongs to the monovalent cation:proton antiporter 2 (CPA2) transporter (TC 2.A.37) family. KefC subfamily. As to quaternary structure, homodimer. Interacts with the regulatory subunit KefF.

It localises to the cell inner membrane. Pore-forming subunit of a potassium efflux system that confers protection against electrophiles. Catalyzes K(+)/H(+) antiport. This is Glutathione-regulated potassium-efflux system protein KefC from Klebsiella pneumoniae subsp. pneumoniae (strain ATCC 700721 / MGH 78578).